We begin with the raw amino-acid sequence, 421 residues long: Medium-chain specific acyl-CoA dehydrogenase, mitochondrial (421 aa).

The transit peptide at 1-25 (MAAALRRGYKVLRSVSHFECRAQHT) directs the protein to the mitochondrion. Lysine 69 bears the N6-acetyllysine; alternate mark. Lysine 69 is modified (N6-succinyllysine; alternate). Lysine 79 is modified (N6-acetyllysine). An FAD-binding site is contributed by 158-167 (YCVTEPSAGS). An octanoyl-CoA-binding site is contributed by serine 167. Lysine 179 is subject to N6-succinyllysine. 191–193 (WIT) serves as a coordination point for FAD. Lysine 212 is modified (N6-acetyllysine; alternate). Residue lysine 212 is modified to N6-succinyllysine; alternate. Serine 216 is a binding site for octanoyl-CoA. N6-acetyllysine; alternate occurs at positions 217, 259, and 271. An N6-succinyllysine; alternate mark is found at lysine 217, lysine 259, and lysine 271. Octanoyl-CoA is bound by residues aspartate 278 and arginine 281. Position 301 is an N6-acetyllysine (lysine 301). FAD-binding positions include 306–308 (RKT) and 316–317 (HQ). Octanoyl-CoA is bound by residues arginine 349 and threonine 351. Threonine 351 carries the phosphothreonine modification. An FAD-binding site is contributed by 374-378 (QIFGG). Glutamate 401 is a binding site for octanoyl-CoA. Glutamate 401 functions as the Proton acceptor in the catalytic mechanism. 402 to 405 (GTAQ) lines the FAD pocket.

The protein belongs to the acyl-CoA dehydrogenase family. Homotetramer. Interacts with the heterodimeric electron transfer flavoprotein ETF. It depends on FAD as a cofactor. Post-translationally, acetylated. Could occur at proximity of the cofactor-binding sites and reduce the catalytic activity. Could be deacetylated by SIRT3.

It localises to the mitochondrion matrix. It carries out the reaction a medium-chain 2,3-saturated fatty acyl-CoA + oxidized [electron-transfer flavoprotein] + H(+) = a medium-chain (2E)-enoyl-CoA + reduced [electron-transfer flavoprotein]. The catalysed reaction is pentanoyl-CoA + oxidized [electron-transfer flavoprotein] + H(+) = (2E)-pentenoyl-CoA + reduced [electron-transfer flavoprotein]. It catalyses the reaction hexanoyl-CoA + oxidized [electron-transfer flavoprotein] + H(+) = (2E)-hexenoyl-CoA + reduced [electron-transfer flavoprotein]. The enzyme catalyses octanoyl-CoA + oxidized [electron-transfer flavoprotein] + H(+) = (2E)-octenoyl-CoA + reduced [electron-transfer flavoprotein]. It carries out the reaction decanoyl-CoA + oxidized [electron-transfer flavoprotein] + H(+) = (2E)-decenoyl-CoA + reduced [electron-transfer flavoprotein]. The catalysed reaction is dodecanoyl-CoA + oxidized [electron-transfer flavoprotein] + H(+) = (2E)-dodecenoyl-CoA + reduced [electron-transfer flavoprotein]. It catalyses the reaction tetradecanoyl-CoA + oxidized [electron-transfer flavoprotein] + H(+) = (2E)-tetradecenoyl-CoA + reduced [electron-transfer flavoprotein]. The enzyme catalyses oxidized [electron-transfer flavoprotein] + hexadecanoyl-CoA + H(+) = (2E)-hexadecenoyl-CoA + reduced [electron-transfer flavoprotein]. Its pathway is lipid metabolism; mitochondrial fatty acid beta-oxidation. In terms of biological role, medium-chain specific acyl-CoA dehydrogenase is one of the acyl-CoA dehydrogenases that catalyze the first step of mitochondrial fatty acid beta-oxidation, an aerobic process breaking down fatty acids into acetyl-CoA and allowing the production of energy from fats. The first step of fatty acid beta-oxidation consists in the removal of one hydrogen from C-2 and C-3 of the straight-chain fatty acyl-CoA thioester, resulting in the formation of trans-2-enoyl-CoA. Electron transfer flavoprotein (ETF) is the electron acceptor that transfers electrons to the main mitochondrial respiratory chain via ETF-ubiquinone oxidoreductase (ETF dehydrogenase). Among the different mitochondrial acyl-CoA dehydrogenases, medium-chain specific acyl-CoA dehydrogenase acts specifically on acyl-CoAs with saturated 6 to 12 carbons long primary chains. The sequence is that of Medium-chain specific acyl-CoA dehydrogenase, mitochondrial from Rattus norvegicus (Rat).